We begin with the raw amino-acid sequence, 186 residues long: Serine hydrolase RBBP9 (186 aa).

The segment at 63–67 (LHCDE) is involved in binding to RB1. Catalysis depends on charge relay system residues Ser-75, Asp-138, and His-165.

The protein belongs to the RBBP9 family. As to quaternary structure, interacts with RB1; the interaction disrupts RB1 binding to E2F1. Interacts with RBL1 and RBL2. As to expression, highly expressed in the spleen, testis and kidney. Also found in the heart, liver, lung and brain.

The catalysed reaction is valacyclovir + H2O = acyclovir + L-valine + H(+). Functionally, serine hydrolase. Catalyzes the hydrolytic activation of amino acid ester of the antiviral prodrug valacyclovir to its corresponding active drug, acyclovir. May negatively regulate basal or autocrine TGF-beta signaling by suppressing SMAD2-SMAD3 phosphorylation. May play a role in the transformation process due to its capacity to confer resistance to the growth-inhibitory effects of TGF-beta through interaction with RB1 and the subsequent displacement of E2F1. This chain is Serine hydrolase RBBP9, found in Rattus norvegicus (Rat).